A 437-amino-acid polypeptide reads, in one-letter code: tRNA(Ile)-lysidine synthase (437 aa).

Position 22 to 27 (22 to 27 (SGGLDS)) interacts with ATP.

Belongs to the tRNA(Ile)-lysidine synthase family.

Its subcellular location is the cytoplasm. The enzyme catalyses cytidine(34) in tRNA(Ile2) + L-lysine + ATP = lysidine(34) in tRNA(Ile2) + AMP + diphosphate + H(+). Functionally, ligates lysine onto the cytidine present at position 34 of the AUA codon-specific tRNA(Ile) that contains the anticodon CAU, in an ATP-dependent manner. Cytidine is converted to lysidine, thus changing the amino acid specificity of the tRNA from methionine to isoleucine. The polypeptide is tRNA(Ile)-lysidine synthase (Xylella fastidiosa (strain Temecula1 / ATCC 700964)).